The primary structure comprises 207 residues: Putative 3-methyladenine DNA glycosylase (207 aa).

This sequence belongs to the DNA glycosylase MPG family.

The polypeptide is Putative 3-methyladenine DNA glycosylase (Listeria welshimeri serovar 6b (strain ATCC 35897 / DSM 20650 / CCUG 15529 / CIP 8149 / NCTC 11857 / SLCC 5334 / V8)).